Consider the following 260-residue polypeptide: Thiazole synthase (260 aa).

Lysine 96 serves as the catalytic Schiff-base intermediate with DXP. 1-deoxy-D-xylulose 5-phosphate-binding positions include glycine 157, 184–185 (AG), and 206–207 (NT).

The protein belongs to the ThiG family. In terms of assembly, homotetramer. Forms heterodimers with either ThiH or ThiS.

The protein localises to the cytoplasm. The enzyme catalyses [ThiS sulfur-carrier protein]-C-terminal-Gly-aminoethanethioate + 2-iminoacetate + 1-deoxy-D-xylulose 5-phosphate = [ThiS sulfur-carrier protein]-C-terminal Gly-Gly + 2-[(2R,5Z)-2-carboxy-4-methylthiazol-5(2H)-ylidene]ethyl phosphate + 2 H2O + H(+). Its pathway is cofactor biosynthesis; thiamine diphosphate biosynthesis. Catalyzes the rearrangement of 1-deoxy-D-xylulose 5-phosphate (DXP) to produce the thiazole phosphate moiety of thiamine. Sulfur is provided by the thiocarboxylate moiety of the carrier protein ThiS. In vitro, sulfur can be provided by H(2)S. The sequence is that of Thiazole synthase from Nitrobacter winogradskyi (strain ATCC 25391 / DSM 10237 / CIP 104748 / NCIMB 11846 / Nb-255).